A 293-amino-acid polypeptide reads, in one-letter code: MAGDNMLKLGIPKGSLQDATIALFEKSGWKIRMHHRNYFPEINDPEITCSMCRAQEMSRYVESGTLDCGLTGKDWILENESDVVVVADLVYSKVSNRPARWVLAVAADSPYKRPEDLAGKKIATELCNFTKQYFSGAGIPVEVEFSWGATEAKVVEGLADAIVEVTETGTTIKAHGLRIISDLLSTNTQLIANKKAWEDPFKRRKIEILNMMLQGALRAEGLVGLKMNVPEEKMPAIMALLPSLTAPTVANLYNKDWLSVEIVVTEGIVRDLIPKLHDLGAEGIIEYALNKVI.

The protein belongs to the ATP phosphoribosyltransferase family. Long subfamily. The cofactor is Mg(2+).

The protein localises to the cytoplasm. It catalyses the reaction 1-(5-phospho-beta-D-ribosyl)-ATP + diphosphate = 5-phospho-alpha-D-ribose 1-diphosphate + ATP. It functions in the pathway amino-acid biosynthesis; L-histidine biosynthesis; L-histidine from 5-phospho-alpha-D-ribose 1-diphosphate: step 1/9. Feedback inhibited by histidine. Catalyzes the condensation of ATP and 5-phosphoribose 1-diphosphate to form N'-(5'-phosphoribosyl)-ATP (PR-ATP). Has a crucial role in the pathway because the rate of histidine biosynthesis seems to be controlled primarily by regulation of HisG enzymatic activity. The protein is ATP phosphoribosyltransferase of Solidesulfovibrio magneticus (strain ATCC 700980 / DSM 13731 / RS-1) (Desulfovibrio magneticus).